The following is a 347-amino-acid chain: MNDLDTLVSAAQADFAAATTPAQLEDAKARFLGKTGRVTELLKGMAALTPDEKKTRGASINETKQRIEAALTARRQALAEAELQAQLKAEALDVTLPGRQRGVGGLHPVSRTLERIEQIFGSMGFDVADGPEIETDWYSFTALNNPENHPARSMQDTFYVDMNDEAGRPLCLRPHTSPMQVRYARQHAALHAGKDTLPEIRVIAPGRTYRVDSDATHSPMFHQCEGLWIGENVSFKDLKSVFTDFFRTFFETDDLELRFRPSFFPFTEPSAEVDIAFASGPLKGRWLEVAGSGQVHPNVVRNFGLDPERYIGFAFGMGPDRLTMLRYGVNDLRLFFEGDLRFLSQFK.

A Mg(2+)-binding site is contributed by Glu268.

The protein belongs to the class-II aminoacyl-tRNA synthetase family. Phe-tRNA synthetase alpha subunit type 1 subfamily. As to quaternary structure, tetramer of two alpha and two beta subunits. Mg(2+) is required as a cofactor.

The protein localises to the cytoplasm. It carries out the reaction tRNA(Phe) + L-phenylalanine + ATP = L-phenylalanyl-tRNA(Phe) + AMP + diphosphate + H(+). This chain is Phenylalanine--tRNA ligase alpha subunit, found in Leptothrix cholodnii (strain ATCC 51168 / LMG 8142 / SP-6) (Leptothrix discophora (strain SP-6)).